The chain runs to 203 residues: ATP-dependent Clp protease proteolytic subunit 2 (203 aa).

The active-site Nucleophile is the serine 97. The active site involves histidine 122.

This sequence belongs to the peptidase S14 family. As to quaternary structure, fourteen ClpP subunits assemble into 2 heptameric rings which stack back to back to give a disk-like structure with a central cavity, resembling the structure of eukaryotic proteasomes.

The protein resides in the cytoplasm. It carries out the reaction Hydrolysis of proteins to small peptides in the presence of ATP and magnesium. alpha-casein is the usual test substrate. In the absence of ATP, only oligopeptides shorter than five residues are hydrolyzed (such as succinyl-Leu-Tyr-|-NHMec, and Leu-Tyr-Leu-|-Tyr-Trp, in which cleavage of the -Tyr-|-Leu- and -Tyr-|-Trp bonds also occurs).. Cleaves peptides in various proteins in a process that requires ATP hydrolysis. Has a chymotrypsin-like activity. Plays a major role in the degradation of misfolded proteins. This is ATP-dependent Clp protease proteolytic subunit 2 from Myxococcus xanthus (strain DK1622).